Here is a 472-residue protein sequence, read N- to C-terminus: GTPase Der (472 aa).

2 consecutive EngA-type G domains span residues 3-166 (AVIA…PPAE) and 178-351 (IPVA…AAAH). GTP contacts are provided by residues 9 to 16 (GRPNVGKS), 56 to 60 (DTGGM), 118 to 121 (NKTD), 184 to 191 (GRPNVGKS), 231 to 235 (DTAGV), and 296 to 299 (NKWD). Positions 352–436 (RDLATPELND…PVRIECRASD (85 aa)) constitute a KH-like domain. Residues 434 to 472 (ASDNPFADKPNQLTERQRRRRQRVIHHAKKREKKRKRRR) form a disordered region. Residues 450–472 (QRRRRQRVIHHAKKREKKRKRRR) are compositionally biased toward basic residues.

The protein belongs to the TRAFAC class TrmE-Era-EngA-EngB-Septin-like GTPase superfamily. EngA (Der) GTPase family. As to quaternary structure, associates with the 50S ribosomal subunit.

In terms of biological role, GTPase that plays an essential role in the late steps of ribosome biogenesis. The sequence is that of GTPase Der from Halorhodospira halophila (strain DSM 244 / SL1) (Ectothiorhodospira halophila (strain DSM 244 / SL1)).